Consider the following 448-residue polypeptide: MKILLLCVALLLIWDNGMVLGEQEVSDNELQELSTQGSRYINKEIQNAVQGVKHIKTLIEKTNAERKSLLNSLEEAKKKKEDALEDTRDSEMKLKAFPEVCNETMMALWEECKPCLKHTCMKFYARVCRSGSGLVGQQLEEFLNQSSPFYFWMNGDRIDSLLESDRQQSQVLDAMQDSFARASGIIDTLFQDRFFARELHDPHYFSPIGFPHKRPHFLYPKSRLVRSLMSPSHYGPPSFHNMFQPFFEMIHQAQQAMDVQLHSPAFQFPDVDFLREGEDDRTVCKEIRRNSTGCLKMKGQCEKCQEILSVDCSTNNPAQANLRQELNDSLQVAERLTEQYKELLQSFQSKMLNTSSLLEQLNDQFNWVSQLANLTQGEDKYYLRVSTVTTHSSDSEVPSRVTEVVVKLFDSDPITVVLPEEVSKDNPKFMDTVAEKALQEYRRKSRAE.

Positions 1–21 (MKILLLCVALLLIWDNGMVLG) are cleaved as a signal peptide. Positions 77-80 (KKKK) match the Nuclear localization signal motif. 5 disulfides stabilise this stretch: Cys101–Cys312, Cys112–Cys304, Cys115–Cys301, Cys120–Cys294, and Cys128–Cys284. An N-linked (GlcNAc...) asparagine glycan is attached at Asn102. Position 132 is a phosphoserine (Ser132). N-linked (GlcNAc...) asparagine glycosylation is found at Asn144, Asn290, Asn327, Asn353, and Asn373. Ser395 is subject to Phosphoserine. The short motif at 442–446 (RRKSR) is the Nuclear localization signal element.

This sequence belongs to the clusterin family. Antiparallel disulfide-linked heterodimer of an alpha chain and a beta chain. Self-associates and forms higher oligomers. Interacts with a broad range of misfolded proteins, including APP, APOC2 and LYZ. Slightly acidic pH promotes interaction with misfolded proteins. Forms high-molecular weight oligomers upon interaction with misfolded proteins. Interacts with APOA1, LRP2, CLUAP1 and PON1. Interacts with the complement membrane attack complex. Interacts (via alpha chain) with XRCC6. Interacts with SYVN1, COMMD1, BTRC, CUL1 and with ubiquitin and SCF (SKP1-CUL1-F-box protein) E3 ubiquitin-protein ligase complexes. Interacts (via alpha chain) with BAX in stressed cells, where BAX undergoes a conformation change leading to association with the mitochondrial membrane. Does not interact with BAX in unstressed cells. Found in a complex with LTF, CLU, EPPIN and SEMG1. Interacts (immaturely glycosylated pre-secreted form) with HSPA5; this interaction promotes CLU stability and facilitates stress-induced CLU retrotranslocation from the secretory pathway to the mitochondria, thereby reducing stress-induced apoptosis by stabilizing mitochondrial membrane integrity. Interacts with BCL2L1; this interaction releases and activates BAX and promotes cell death. Interacts with TGFBR2 and ACVR1. Interacts (secreted form) with STMN3; this interaction may act as an important modulator during neuronal differentiation. Interacts with VLDLR and LRP8. In terms of processing, proteolytically cleaved on its way through the secretory system, probably within the Golgi lumen. Proteolytic cleavage is not necessary for its chaperone activity. All non-secreted forms are not proteolytically cleaved. Chaperone activity of uncleaved forms is dependent on a non-reducing environment. Post-translationally, polyubiquitinated, leading to proteasomal degradation. Under cellular stress, the intracellular level of cleaved form is reduced due to proteasomal degradation. Extensively glycosylated with sulfated N-linked carbohydrates. About 30% of the protein mass is comprised of complex N-linked carbohydrate. Endoplasmic reticulum (ER) stress induces changes in glycosylation status and increases level of hypoglycosylated forms. Core carbohydrates are essential for chaperone activity. Non-secreted forms are hypoglycosylated or unglycosylated. Most abundant in stomach, liver, brain, and testis, with intermediate levels in heart, ovary and kidney.

It is found in the secreted. The protein resides in the nucleus. Its subcellular location is the cytoplasm. The protein localises to the mitochondrion membrane. It localises to the cytosol. It is found in the microsome. The protein resides in the endoplasmic reticulum. Its subcellular location is the mitochondrion. The protein localises to the perinuclear region. It localises to the cytoplasmic vesicle. It is found in the secretory vesicle. The protein resides in the chromaffin granule. Functions as extracellular chaperone that prevents aggregation of non native proteins. Prevents stress-induced aggregation of blood plasma proteins. Inhibits formation of amyloid fibrils by APP, APOC2, B2M, CALCA, CSN3, SNCA and aggregation-prone LYZ variants (in vitro). Does not require ATP. Maintains partially unfolded proteins in a state appropriate for subsequent refolding by other chaperones, such as HSPA8/HSC70. Does not refold proteins by itself. Binding to cell surface receptors triggers internalization of the chaperone-client complex and subsequent lysosomal or proteasomal degradation. When secreted, protects cells against apoptosis and against cytolysis by complement: inhibits assembly of the complement membrane attack complex (MAC) by preventing polymerization of C9 pore component of the MAC complex. Intracellular forms interact with ubiquitin and SCF (SKP1-CUL1-F-box protein) E3 ubiquitin-protein ligase complexes and promote the ubiquitination and subsequent proteasomal degradation of target proteins. Promotes proteasomal degradation of COMMD1 and IKBKB. Modulates NF-kappa-B transcriptional activity. Following stress, promotes apoptosis. Inhibits apoptosis when associated with the mitochondrial membrane by interference with BAX-dependent release of cytochrome c into the cytoplasm. Plays a role in the regulation of cell proliferation. Following ER stress, suppresses stress-induced apoptosis by stabilizing mitochondrial membrane integrity through interaction with HSPA5. When secreted, does not affect caspase or BAX-mediated intrinsic apoptosis and TNF-induced NF-kappa-B-activity. When secreted, acts as an important modulator during neuronal differentiation through interaction with STMN3. Plays a role in the clearance of immune complexes that arise during cell injury. This chain is Clusterin, found in Mus musculus (Mouse).